The chain runs to 579 residues: Mitochondrial distribution and morphology protein 31 (579 aa).

A mitochondrion-targeting transit peptide spans 1 to 47 (MSLFTRPFLRSPRQFSVARYVYWARSPALRSNLRIPSIAAASLRAYS). Over 48-114 (NESKTGRDAP…SDDISAFISW (67 aa)) the chain is Mitochondrial matrix. The helical transmembrane segment at 115 to 135 (ILVSNIFIFIFWTTTFVSLIL) threads the bilayer. The Mitochondrial intermembrane portion of the chain corresponds to 136-558 (YLINTVFAQE…DEKRTLRLRR (423 aa)). Residues 559 to 578 (VGFWSLQLILQVILMSLGAI) traverse the membrane as a helical segment. A topological domain (mitochondrial matrix) is located at residue Ala579.

Belongs to the MDM31/MDM32 family. As to quaternary structure, interacts with MDM32. Participates in a complex of about 600 kDa.

It is found in the mitochondrion inner membrane. Involved in the organization of the mitochondrial membranes and the global structure of the mitochondria. Also required for mitochondrial distribution and mobility as well as for the maintenance of mitochondrial DNA nucleoids structures. This is Mitochondrial distribution and morphology protein 31 (MDM31) from Saccharomyces cerevisiae (strain ATCC 204508 / S288c) (Baker's yeast).